The following is a 480-amino-acid chain: Aromatic-L-amino-acid decarboxylase (480 aa).

Met-1 carries the N-acetylmethionine modification. 2 repeat units span residues 58–115 and 118–178. The 2 X approximate tandem repeats stretch occupies residues 58 to 178; that stretch reads RDIEKIIMPG…AASPELTQAA (121 aa). Residue Thr-82 coordinates substrate. Ala-148 and Ser-149 together coordinate pyridoxal 5'-phosphate. His-192 provides a ligand contact to substrate. Thr-246 and Asn-300 together coordinate pyridoxal 5'-phosphate. N6-(pyridoxal phosphate)lysine is present on Lys-303.

Belongs to the group II decarboxylase family. Homodimer. Pyridoxal 5'-phosphate is required as a cofactor.

It carries out the reaction L-dopa + H(+) = dopamine + CO2. It catalyses the reaction 5-hydroxy-L-tryptophan + H(+) = serotonin + CO2. The protein operates within catecholamine biosynthesis; dopamine biosynthesis; dopamine from L-tyrosine: step 2/2. In terms of biological role, catalyzes the decarboxylation of L-3,4-dihydroxyphenylalanine (DOPA) to dopamine and L-5-hydroxytryptophan to serotonin. The chain is Aromatic-L-amino-acid decarboxylase from Rattus norvegicus (Rat).